Here is a 280-residue protein sequence, read N- to C-terminus: Putative pyruvate, phosphate dikinase regulatory protein (280 aa).

Residue 158-165 (GVSRTSKT) participates in ADP binding.

It belongs to the pyruvate, phosphate/water dikinase regulatory protein family. PDRP subfamily.

It catalyses the reaction N(tele)-phospho-L-histidyl/L-threonyl-[pyruvate, phosphate dikinase] + ADP = N(tele)-phospho-L-histidyl/O-phospho-L-threonyl-[pyruvate, phosphate dikinase] + AMP + H(+). It carries out the reaction N(tele)-phospho-L-histidyl/O-phospho-L-threonyl-[pyruvate, phosphate dikinase] + phosphate + H(+) = N(tele)-phospho-L-histidyl/L-threonyl-[pyruvate, phosphate dikinase] + diphosphate. Functionally, bifunctional serine/threonine kinase and phosphorylase involved in the regulation of the pyruvate, phosphate dikinase (PPDK) by catalyzing its phosphorylation/dephosphorylation. This Lactobacillus gasseri (strain ATCC 33323 / DSM 20243 / BCRC 14619 / CIP 102991 / JCM 1131 / KCTC 3163 / NCIMB 11718 / NCTC 13722 / AM63) protein is Putative pyruvate, phosphate dikinase regulatory protein.